The chain runs to 65 residues: Sulfur carrier protein TtuB (65 aa).

Gly-65 is subject to 1-thioglycine; alternate. Gly-65 carries the post-translational modification Glycyl adenylate; alternate. Residue Gly-65 forms a Glycyl cysteine thioester (Gly-Cys) (interchain with C-192 in TtuC); alternate linkage. Residue Gly-65 forms a Glycyl lysine isopeptide (Gly-Lys) (interchain with K-? in acceptor proteins); alternate linkage.

This sequence belongs to the TtuB family. Is able to form a heterocomplex with TtuA. In terms of processing, the C-terminal glycine residue of TtuB is first activated by TtuC as an acyl-adenylate (TtuB-COAMP), and then converted to the thiocarboxylate form (TtuB-COSH) by the cysteine desulfurases IscS or SufS.

The protein operates within tRNA modification. Functionally, required for the 2-thiolation of 5-methyluridine residue at position 54 in the T loop of tRNAs, leading to 5-methyl-2-thiouridine (m(5)s(2)U or s(2)T). This modification allows thermal stabilization of tRNAs in thermophilic microorganisms, and is essential for cell growth at high temperatures. Thiocarboxylated TtuB functions as the sulfur donor in the sulfurtransferase reaction catalyzed by TtuA. TtuB also functions as a protein modifier covalently attached to lysine residues of the target proteins TtuA and TtuC. TtuB conjugation might play a regulatory role to ensure appropriate sulfur transfer in cells. The sequence is that of Sulfur carrier protein TtuB from Thermus thermophilus (strain ATCC BAA-163 / DSM 7039 / HB27).